Consider the following 2098-residue polypeptide: Non-reducing polyketide synthase crz7 (2098 aa).

Positions 8-243 (ILFGDQTVDP…IKLPITAAFH (236 aa)) constitute a Starter acyltransferase (SAT) domain. Residues 364-789 (SSDIAIIGFA…GGNTSLLLED (426 aa)) enclose the Ketosynthase family 3 (KS3) domain. Catalysis depends on for beta-ketoacyl synthase activity residues Cys532, His667, and His706. Positions 887-1211 (IFLFTGQGSQ…IANAYNSGVK (325 aa)) constitute a Malonyl-CoA:ACP transacylase (MAT) domain. The tract at residues 1270 to 1404 (TCLQGVENET…CTVMYGDGQQ (135 aa)) is N-terminal hotdog fold. The 309-residue stretch at 1270-1578 (TCLQGVENET…FQQMKRTTLQ (309 aa)) folds into the PKS/mFAS DH domain. The Proton acceptor; for dehydratase activity role is filled by His1305. Residues 1431–1578 (IHRMLKEMIY…FQQMKRTTLQ (148 aa)) form a C-terminal hotdog fold region. Catalysis depends on Asp1491, which acts as the Proton donor; for dehydratase activity. In terms of domain architecture, Carrier 1 spans 1613–1690 (QSPSAGFSKV…ELRAFFLDKM (78 aa)). O-(pantetheine 4'-phosphoryl)serine is present on Ser1650. The disordered stretch occupies residues 1693-1725 (PQATANDDDSDDSSEDEDPGYSRSQSNSTISTP). Residues 1698–1711 (NDDDSDDSSEDEDP) are compositionally biased toward acidic residues. Polar residues predominate over residues 1714-1724 (SRSQSNSTIST). Residues 1725–1802 (PEEPDVVSIL…DVQKALGPTS (78 aa)) enclose the Carrier 2 domain. Residue Ser1762 is modified to O-(pantetheine 4'-phosphoryl)serine. The thioesterase (TE) domain stretch occupies residues 1844 to 2080 (LFLLPDGAGS…VSGNHFSIMF (237 aa)).

Requires pantetheine 4'-phosphate as cofactor.

It functions in the pathway secondary metabolite biosynthesis. Functionally, non-reducing polyketide synthase; part of the gene cluster that mediates the biosynthesis of the red pigment cristazarin, a naphthazarin derivative. The polyketide product of crz7 is likely 2-acetyl-1,3,6,8-tetrahydoxynaphthalene (AT4HN) from which a probable biosynthetic route of cristazarin can be deduced. The presence of two O-methyltransferases (crz1 and crz2), an enoyl reductase (crz5), an oxidase (crz8), and a short-chain dehydrogenase (crz9) encoded in the cristazarin biosynthetic cluster is consistent with methylation of a hydroxyl group, addition of two hydroxyl groups to the naphthalene core ring, and reduction of the acetyl side chain. The protein is Non-reducing polyketide synthase crz7 of Cladonia metacorallifera (Lichen-forming fungus).